A 198-amino-acid chain; its full sequence is Small ribosomal subunit protein eS1 (198 aa).

The protein belongs to the eukaryotic ribosomal protein eS1 family.

The sequence is that of Small ribosomal subunit protein eS1 from Methanospirillum hungatei JF-1 (strain ATCC 27890 / DSM 864 / NBRC 100397 / JF-1).